The following is a 357-amino-acid chain: Anthranilate phosphoribosyltransferase (357 aa).

5-phospho-alpha-D-ribose 1-diphosphate-binding positions include G91, 94-95 (GD), T99, 101-104 (NIST), 119-127 (KHGNRSVSS), and S131. G91 is a binding site for anthranilate. S103 is a binding site for Mg(2+). N122 lines the anthranilate pocket. Residue R177 participates in anthranilate binding. Residues D235 and E236 each coordinate Mg(2+).

This sequence belongs to the anthranilate phosphoribosyltransferase family. As to quaternary structure, homodimer. It depends on Mg(2+) as a cofactor.

It carries out the reaction N-(5-phospho-beta-D-ribosyl)anthranilate + diphosphate = 5-phospho-alpha-D-ribose 1-diphosphate + anthranilate. It functions in the pathway amino-acid biosynthesis; L-tryptophan biosynthesis; L-tryptophan from chorismate: step 2/5. In terms of biological role, catalyzes the transfer of the phosphoribosyl group of 5-phosphorylribose-1-pyrophosphate (PRPP) to anthranilate to yield N-(5'-phosphoribosyl)-anthranilate (PRA). In Shewanella baltica (strain OS185), this protein is Anthranilate phosphoribosyltransferase.